The following is a 901-amino-acid chain: Aconitate hydratase A (901 aa).

[4Fe-4S] cluster-binding residues include C443, C509, and C512.

The protein belongs to the aconitase/IPM isomerase family. As to quaternary structure, monomer. [4Fe-4S] cluster serves as cofactor.

The catalysed reaction is citrate = D-threo-isocitrate. The enzyme catalyses (2S,3R)-3-hydroxybutane-1,2,3-tricarboxylate = 2-methyl-cis-aconitate + H2O. The protein operates within carbohydrate metabolism; tricarboxylic acid cycle; isocitrate from oxaloacetate: step 2/2. It functions in the pathway organic acid metabolism; propanoate degradation. Its function is as follows. Involved in the catabolism of short chain fatty acids (SCFA) via the tricarboxylic acid (TCA)(acetyl degradation route) and probably the 2-methylcitrate cycle I (propionate degradation route). Catalyzes the reversible isomerization of citrate to isocitrate via cis-aconitate. Could catalyze the hydration of 2-methyl-cis-aconitate to yield (2R,3S)-2-methylisocitrate. The apo form of AcnA functions as a RNA-binding regulatory protein. The sequence is that of Aconitate hydratase A (acnA) from Staphylococcus aureus (strain MRSA252).